We begin with the raw amino-acid sequence, 300 residues long: Erythroblast NAD(P)(+)--arginine ADP-ribosyltransferase (300 aa).

The first 22 residues, 1–22 (MEEPLLHAILGLVLLLSTRTDA), serve as a signal peptide directing secretion. 2 disulfides stabilise this stretch: C51/C260 and C159/C208. A TR mART core domain is found at 70 to 256 (ETFAEGWRSA…IQLRSQGKSS (187 aa)). Positions 107, 164, and 183 each coordinate NAD(+). Residue R164 is part of the active site. S186 is a catalytic residue. S217 serves as a coordination point for NAD(+). E224 is a catalytic residue. The interval 276–300 (SADKSSPLPRSPWPGWAPLAAPHSH) is disordered.

This sequence belongs to the Arg-specific ADP-ribosyltransferase family.

The enzyme catalyses L-arginyl-[protein] + NAD(+) = N(omega)-(ADP-D-ribosyl)-L-arginyl-[protein] + nicotinamide + H(+). The protein is Erythroblast NAD(P)(+)--arginine ADP-ribosyltransferase (MADPRT) of Gallus gallus (Chicken).